The primary structure comprises 261 residues: Putative [LysW]-aminoadipate/[LysW]-glutamate kinase (261 aa).

Substrate contacts are provided by residues 35-36, arginine 62, and asparagine 162; that span reads GG.

The protein belongs to the acetylglutamate kinase family. LysZ subfamily.

Its subcellular location is the cytoplasm. The catalysed reaction is [amino-group carrier protein]-C-terminal-N-(1,4-dicarboxybutan-1-yl)-L-glutamine + ATP = [amino-group carrier protein]-C-terminal-N-(1-carboxy-5-phosphooxy-5-oxopentan-1-yl)-L-glutamine + ADP. It catalyses the reaction [amino-group carrier protein]-C-terminal-gamma-(L-glutamyl)-L-glutamate + ATP = [amino-group carrier protein]-C-terminal-gamma-(5-phospho-L-glutamyl)-L-glutamate + ADP. Its pathway is amino-acid biosynthesis; L-lysine biosynthesis via AAA pathway; L-lysine from L-alpha-aminoadipate (Thermus route): step 2/5. It functions in the pathway amino-acid biosynthesis; L-arginine biosynthesis. Involved in both the arginine and lysine biosynthetic pathways. Phosphorylates the LysW-bound precursors glutamate (for arginine biosynthesis), respectively alpha-aminoadipate (for lysine biosynthesis). This chain is Putative [LysW]-aminoadipate/[LysW]-glutamate kinase, found in Pyrobaculum islandicum (strain DSM 4184 / JCM 9189 / GEO3).